A 244-amino-acid chain; its full sequence is Ethylene-responsive transcription factor 1 (244 aa).

The AP2/ERF DNA-binding region spans 106-164; sequence HYRGVRQRPWGKFAAEIRDPAKNGARVWLGTYESAEEAALAYGKAAFRMRGTKALLNFP. Low complexity predominate over residues 186 to 198; it reads SASSSVSSASESG. Residues 186-214 are disordered; it reads SASSSVSSASESGSPKRRRKGVAAKQAEL.

Belongs to the ethylene-response factor family. Class 1 subfamily. Present in stems.

Its subcellular location is the nucleus. Functionally, involved in the regulation of gene expression during fruit ripening, by stress factors and by components of stress signal transduction pathways. Transcription factor that binds to the GCC-box pathogenesis-related promoter element. Probably acts as a transcriptional activator and may be involved in disease resistance pathways. This chain is Ethylene-responsive transcription factor 1 (ERF1), found in Solanum lycopersicum (Tomato).